The primary structure comprises 209 residues: Protein GrpE (209 aa).

2 stretches are compositionally biased toward basic and acidic residues: residues 1-16 (MKKSTKKESTHSKEES) and 34-44 (KAGEKTAEPEK). A disordered region spans residues 1–61 (MKKSTKKEST…EKSPEAACRE (61 aa)).

The protein belongs to the GrpE family. As to quaternary structure, homodimer.

Its subcellular location is the cytoplasm. In terms of biological role, participates actively in the response to hyperosmotic and heat shock by preventing the aggregation of stress-denatured proteins, in association with DnaK and GrpE. It is the nucleotide exchange factor for DnaK and may function as a thermosensor. Unfolded proteins bind initially to DnaJ; upon interaction with the DnaJ-bound protein, DnaK hydrolyzes its bound ATP, resulting in the formation of a stable complex. GrpE releases ADP from DnaK; ATP binding to DnaK triggers the release of the substrate protein, thus completing the reaction cycle. Several rounds of ATP-dependent interactions between DnaJ, DnaK and GrpE are required for fully efficient folding. This is Protein GrpE from Methanosarcina acetivorans (strain ATCC 35395 / DSM 2834 / JCM 12185 / C2A).